We begin with the raw amino-acid sequence, 488 residues long: Glutamate--tRNA ligase (488 aa).

The 'HIGH' region signature appears at 12 to 22 (PSPTGYMHVGN). Residues Cys-109, Cys-111, Cys-136, and His-138 each coordinate Zn(2+). Positions 253–257 (KLSKR) match the 'KMSKS' region motif. Lys-256 is a binding site for ATP.

Belongs to the class-I aminoacyl-tRNA synthetase family. Glutamate--tRNA ligase type 1 subfamily. As to quaternary structure, monomer. It depends on Zn(2+) as a cofactor.

The protein localises to the cytoplasm. The enzyme catalyses tRNA(Glu) + L-glutamate + ATP = L-glutamyl-tRNA(Glu) + AMP + diphosphate. Functionally, catalyzes the attachment of glutamate to tRNA(Glu) in a two-step reaction: glutamate is first activated by ATP to form Glu-AMP and then transferred to the acceptor end of tRNA(Glu). This chain is Glutamate--tRNA ligase, found in Clostridium tetani (strain Massachusetts / E88).